The sequence spans 220 residues: Small ribosomal subunit protein eS1 (220 aa).

This sequence belongs to the eukaryotic ribosomal protein eS1 family.

This is Small ribosomal subunit protein eS1 from Pyrobaculum arsenaticum (strain DSM 13514 / JCM 11321 / PZ6).